The primary structure comprises 702 residues: Pseudouridylate synthase PUS7L (702 aa).

A Phosphoserine modification is found at S79. Positions N84–S116 are disordered. The segment covering D96–N109 has biased composition (basic and acidic residues). Catalysis depends on D339, which acts as the Nucleophile. Positions G424–H646 constitute a TRUD domain.

Belongs to the pseudouridine synthase TruD family.

It carries out the reaction a uridine in mRNA = a pseudouridine in mRNA. Pseudouridine synthase that catalyzes pseudouridylation of mRNAs. The chain is Pseudouridylate synthase PUS7L from Mus musculus (Mouse).